The following is a 387-amino-acid chain: ERBB-3 BINDING PROTEIN 1 (387 aa).

2 necessary for nucleolar localization regions span residues 1 to 49 (MSDD…IVDL) and 297 to 387 (LLQP…PMEG). An RNA-binding region spans residues 47 to 55 (VDLCEKGDA). The tract at residues 337–387 (LQPTKTTENEPEIKAWLALPTKTKKKGGGKKKKGKKGDKVEEASQAEPMEG) is disordered. Residues 356-373 (PTKTKKKGGGKKKKGKKG) form an interaction with RNA region. The segment covering 358 to 372 (KTKKKGGGKKKKGKK) has biased composition (basic residues). The short motif at 360–369 (KKKGGGKKKK) is the Nuclear localization signal element.

It belongs to the peptidase M24 family. In terms of assembly, component of a ribonucleoprotein complex. As to expression, expressed during tuberisation and in roots, nodes, internodes, petioles, leaves, stolons, tubers and sprouts.

The protein localises to the nucleus. Binds RNA. Associates with 28S, 18S and 5.8S mature rRNAs, several rRNA precursors and probably U3 small nucleolar RNA. May be involved in regulation of intermediate and late steps of rRNA processing. May be involved in ribosome assembly. Required for expression of cell cycle genes such as CYCD3-1, RNR2A and CDKB1-1. Promotes, in a dose- and auxin-dependent manner, organ growth by stimulating both cell proliferation and expansion, via the regulation of RBR1 levels. This chain is ERBB-3 BINDING PROTEIN 1, found in Solanum tuberosum (Potato).